The chain runs to 395 residues: uncharacterized protein (395 aa).

A coiled-coil region spans residues valine 288–lysine 318.

This is an uncharacterized protein from Ostreid herpesvirus 1 (isolate France) (OsHV-1).